Reading from the N-terminus, the 254-residue chain is MLQTEMKVIQQTEIADKVYELILTGECVADMSPGQFLMLKPSRSDLLMRRPISICSYDKTAKTCILLYRIEGDGTRDFSKLSEGDTIDVLGPLGKGFDIDQTPAPKTALLIGGGIGVPPMYQLGKELAGKGVQVTFVNGFQSAKDSFYEKEMNAYGTVHIATVDGSLGTQGFVTDITNNFPEEPDVIYSCGPKAMLQAVKASFPETKTYLSLEERMACGIGACYACVCPKADDAKKQFKVCEDGPVFRADEVSL.

Residues 1–99 (MLQTEMKVIQ…LGPLGKGFDI (99 aa)) enclose the FAD-binding FR-type domain. FAD-binding positions include 50 to 53 (RPIS), 67 to 69 (LYR), and 74 to 75 (GT). The [2Fe-2S] cluster site is built by Cys-218, Cys-223, Cys-226, and Cys-241.

It belongs to the PyrK family. As to quaternary structure, heterotetramer of 2 PyrK and 2 PyrD type B subunits. [2Fe-2S] cluster is required as a cofactor. Requires FAD as cofactor.

The protein operates within pyrimidine metabolism; UMP biosynthesis via de novo pathway; orotate from (S)-dihydroorotate (NAD(+) route): step 1/1. In terms of biological role, responsible for channeling the electrons from the oxidation of dihydroorotate from the FMN redox center in the PyrD type B subunit to the ultimate electron acceptor NAD(+). This Listeria monocytogenes serotype 4b (strain F2365) protein is Dihydroorotate dehydrogenase B (NAD(+)), electron transfer subunit.